The chain runs to 210 residues: 3 beta-hydroxysteroid dehydrogenase/Delta 5--&gt;4-isomerase (210 aa).

Tyr-29 serves as the catalytic Proton acceptor. Residue Lys-33 coordinates NAD(+).

Belongs to the 3-beta-HSD family.

It carries out the reaction a 3beta-hydroxy-Delta(5)-steroid + NAD(+) = a 3-oxo-Delta(5)-steroid + NADH + H(+). The enzyme catalyses a 3-oxo-Delta(5)-steroid = a 3-oxo-Delta(4)-steroid. It participates in lipid metabolism; steroid biosynthesis. In terms of biological role, catalyzes the oxidative conversion of Delta(5)-ene-3-beta-hydroxy steroid, and the oxidative conversion of ketosteroids. The 3-beta-HSD enzymatic system plays a crucial role in the biosynthesis of all classes of hormonal steroids. During viral infection, steroid production contributes to virulence by inhibiting the host inflammatory response. The chain is 3 beta-hydroxysteroid dehydrogenase/Delta 5--&gt;4-isomerase (OPG174) from Variola virus (isolate Human/India/Ind3/1967) (VARV).